The primary structure comprises 317 residues: Transaldolase (317 aa).

Lys126 acts as the Schiff-base intermediate with substrate in catalysis.

It belongs to the transaldolase family. Type 1 subfamily. As to quaternary structure, homodimer.

The protein localises to the cytoplasm. It catalyses the reaction D-sedoheptulose 7-phosphate + D-glyceraldehyde 3-phosphate = D-erythrose 4-phosphate + beta-D-fructose 6-phosphate. It functions in the pathway carbohydrate degradation; pentose phosphate pathway; D-glyceraldehyde 3-phosphate and beta-D-fructose 6-phosphate from D-ribose 5-phosphate and D-xylulose 5-phosphate (non-oxidative stage): step 2/3. Transaldolase is important for the balance of metabolites in the pentose-phosphate pathway. The chain is Transaldolase from Burkholderia lata (strain ATCC 17760 / DSM 23089 / LMG 22485 / NCIMB 9086 / R18194 / 383).